The primary structure comprises 101 residues: MAKQSMKAREVVRVKLANKYRAKREELKAIISGVNSSDEDRWDAVLKLQSLPRDSSPSRQRNRCNQTGRPHGFLRKFGLSRIKVRETAMRGEIPGLKKASW.

Residues 49 to 70 form a disordered region; sequence QSLPRDSSPSRQRNRCNQTGRP. The span at 52–68 shows a compositional bias: polar residues; the sequence is PRDSSPSRQRNRCNQTG.

The protein belongs to the universal ribosomal protein uS14 family. As to quaternary structure, part of the 30S ribosomal subunit. Contacts proteins S3 and S10.

Binds 16S rRNA, required for the assembly of 30S particles and may also be responsible for determining the conformation of the 16S rRNA at the A site. The protein is Small ribosomal subunit protein uS14 of Yersinia pseudotuberculosis serotype O:1b (strain IP 31758).